Reading from the N-terminus, the 114-residue chain is Lymphotactin (114 aa).

Positions M1–G21 are cleaved as a signal peptide. C32 and C69 are disulfide-bonded. Positions R87–G114 are disordered. Residues I98–G114 are compositionally biased toward polar residues.

It belongs to the intercrine gamma family.

Its subcellular location is the secreted. Chemotactic activity for lymphocytes but not for monocytes or neutrophils. In thymus, mediates medullary accumulation of thymic dendritic cells and contributes to regulatoy T cell development, playing a role in self-tolerance establishment. The polypeptide is Lymphotactin (Xcl1) (Rattus norvegicus (Rat)).